The following is a 237-amino-acid chain: Proteasome subunit beta type-1-B (237 aa).

Belongs to the peptidase T1B family. As to quaternary structure, the 26S proteasome consists of a 20S proteasome core and two 19S regulatory subunits. The 20S proteasome core is composed of 28 subunits that are arranged in four stacked rings, resulting in a barrel-shaped structure. The two end rings are each formed by seven alpha subunits, and the two central rings are each formed by seven beta subunits. The catalytic chamber with the active sites is on the inside of the barrel.

It is found in the cytoplasm. Its subcellular location is the nucleus. Functionally, non-catalytic component of the proteasome, a multicatalytic proteinase complex which is characterized by its ability to cleave peptides with Arg, Phe, Tyr, Leu, and Glu adjacent to the leaving group at neutral or slightly basic pH. The proteasome has an ATP-dependent proteolytic activity. The protein is Proteasome subunit beta type-1-B (psmb1-B) of Carassius auratus (Goldfish).